The following is a 376-amino-acid chain: Queuine tRNA-ribosyltransferase (376 aa).

The Proton acceptor role is filled by D90. Residues 90 to 94, D144, Q193, and G220 each bind substrate; that span reads DSGGF. The tract at residues 251 to 257 is RNA binding; it reads GVGTPED. D270 functions as the Nucleophile in the catalytic mechanism. Positions 275–279 are RNA binding; important for wobble base 34 recognition; the sequence is TRNAR. 4 residues coordinate Zn(2+): C308, C310, C313, and H339.

It belongs to the queuine tRNA-ribosyltransferase family. As to quaternary structure, homodimer. Within each dimer, one monomer is responsible for RNA recognition and catalysis, while the other monomer binds to the replacement base PreQ1. Zn(2+) serves as cofactor.

The enzyme catalyses 7-aminomethyl-7-carbaguanine + guanosine(34) in tRNA = 7-aminomethyl-7-carbaguanosine(34) in tRNA + guanine. Its pathway is tRNA modification; tRNA-queuosine biosynthesis. Functionally, catalyzes the base-exchange of a guanine (G) residue with the queuine precursor 7-aminomethyl-7-deazaguanine (PreQ1) at position 34 (anticodon wobble position) in tRNAs with GU(N) anticodons (tRNA-Asp, -Asn, -His and -Tyr). Catalysis occurs through a double-displacement mechanism. The nucleophile active site attacks the C1' of nucleotide 34 to detach the guanine base from the RNA, forming a covalent enzyme-RNA intermediate. The proton acceptor active site deprotonates the incoming PreQ1, allowing a nucleophilic attack on the C1' of the ribose to form the product. After dissociation, two additional enzymatic reactions on the tRNA convert PreQ1 to queuine (Q), resulting in the hypermodified nucleoside queuosine (7-(((4,5-cis-dihydroxy-2-cyclopenten-1-yl)amino)methyl)-7-deazaguanosine). The polypeptide is Queuine tRNA-ribosyltransferase (Cupriavidus pinatubonensis (strain JMP 134 / LMG 1197) (Cupriavidus necator (strain JMP 134))).